We begin with the raw amino-acid sequence, 174 residues long: 3-hydroxydecanoyl-[acyl-carrier-protein] dehydratase (174 aa).

Residue H73 is part of the active site.

Belongs to the thioester dehydratase family. FabA subfamily. In terms of assembly, homodimer.

The protein resides in the cytoplasm. It catalyses the reaction a (3R)-hydroxyacyl-[ACP] = a (2E)-enoyl-[ACP] + H2O. The enzyme catalyses (3R)-hydroxydecanoyl-[ACP] = (2E)-decenoyl-[ACP] + H2O. The catalysed reaction is (2E)-decenoyl-[ACP] = (3Z)-decenoyl-[ACP]. It participates in lipid metabolism; fatty acid biosynthesis. In terms of biological role, necessary for the introduction of cis unsaturation into fatty acids. Catalyzes the dehydration of (3R)-3-hydroxydecanoyl-ACP to E-(2)-decenoyl-ACP and then its isomerization to Z-(3)-decenoyl-ACP. Can catalyze the dehydratase reaction for beta-hydroxyacyl-ACPs with saturated chain lengths up to 16:0, being most active on intermediate chain length. The chain is 3-hydroxydecanoyl-[acyl-carrier-protein] dehydratase from Cellvibrio japonicus (strain Ueda107) (Pseudomonas fluorescens subsp. cellulosa).